The sequence spans 172 residues: MIKKDEVFKIGIFNKPHGVKGEISFTFTDDIFDRVECEYLVCLLDGIFVPFFIEEYRFRSDTTALVKLEGVDTSEKARMFTNVEVYFPKKYVGEEEDSDDIPTWNYFIGFKVEDVNHGELGEIVAVDDSTMNVLFAIEKGGEELLLPAHEEFITKLDKKKRLLTVEVPDGLI.

In terms of domain architecture, PRC barrel spans 99 to 171; that stretch reads DDIPTWNYFI…LLTVEVPDGL (73 aa).

The protein belongs to the RimM family. As to quaternary structure, binds ribosomal protein uS19.

The protein localises to the cytoplasm. In terms of biological role, an accessory protein needed during the final step in the assembly of 30S ribosomal subunit, possibly for assembly of the head region. Essential for efficient processing of 16S rRNA. May be needed both before and after RbfA during the maturation of 16S rRNA. It has affinity for free ribosomal 30S subunits but not for 70S ribosomes. This is Ribosome maturation factor RimM from Phocaeicola vulgatus (strain ATCC 8482 / DSM 1447 / JCM 5826 / CCUG 4940 / NBRC 14291 / NCTC 11154) (Bacteroides vulgatus).